The following is a 222-amino-acid chain: ER membrane protein complex subunit 7 homolog (222 aa).

The signal sequence occupies residues Met-1–Ala-16. The Extracellular portion of the chain corresponds to Thr-17–Asp-145. Residues Met-146–Pro-166 form a helical membrane-spanning segment. The Cytoplasmic portion of the chain corresponds to Lys-167–Lys-222.

This sequence belongs to the EMC7 family.

The protein localises to the membrane. This Caenorhabditis elegans protein is ER membrane protein complex subunit 7 homolog.